The following is a 328-amino-acid chain: Tetraacyldisaccharide 4'-kinase (328 aa).

55 to 62 (TAGGNGKT) is an ATP binding site.

The protein belongs to the LpxK family.

The catalysed reaction is a lipid A disaccharide + ATP = a lipid IVA + ADP + H(+). It functions in the pathway glycolipid biosynthesis; lipid IV(A) biosynthesis; lipid IV(A) from (3R)-3-hydroxytetradecanoyl-[acyl-carrier-protein] and UDP-N-acetyl-alpha-D-glucosamine: step 6/6. Its function is as follows. Transfers the gamma-phosphate of ATP to the 4'-position of a tetraacyldisaccharide 1-phosphate intermediate (termed DS-1-P) to form tetraacyldisaccharide 1,4'-bis-phosphate (lipid IVA). The sequence is that of Tetraacyldisaccharide 4'-kinase from Escherichia coli O45:K1 (strain S88 / ExPEC).